Consider the following 278-residue polypeptide: S-formylglutathione hydrolase YeiG (278 aa).

Catalysis depends on charge relay system residues Ser145, Asp223, and His256.

This sequence belongs to the esterase D family.

The catalysed reaction is S-formylglutathione + H2O = formate + glutathione + H(+). In terms of biological role, serine hydrolase involved in the detoxification of formaldehyde. Hydrolyzes S-formylglutathione to glutathione and formate. The chain is S-formylglutathione hydrolase YeiG (yeiG) from Shigella boydii serotype 4 (strain Sb227).